The primary structure comprises 210 residues: Putative O-methyltransferase MSMEG_5073/MSMEI_4947 (210 aa).

Residues valine 37, glutamate 59, 61-62 (GT), serine 67, aspartate 85, and valine 86 each bind S-adenosyl-L-methionine. Aspartate 133 contributes to the substrate binding site. Position 135 (aspartate 135) interacts with S-adenosyl-L-methionine.

The protein belongs to the class I-like SAM-binding methyltransferase superfamily. Cation-dependent O-methyltransferase family.

The polypeptide is Putative O-methyltransferase MSMEG_5073/MSMEI_4947 (Mycolicibacterium smegmatis (strain ATCC 700084 / mc(2)155) (Mycobacterium smegmatis)).